The primary structure comprises 601 residues: Adenine deaminase (601 aa).

This sequence belongs to the metallo-dependent hydrolases superfamily. Adenine deaminase family. It depends on Mn(2+) as a cofactor.

It carries out the reaction adenine + H2O + H(+) = hypoxanthine + NH4(+). The polypeptide is Adenine deaminase (Ruegeria sp. (strain TM1040) (Silicibacter sp.)).